The chain runs to 52 residues: Alpha-crystallin B chain (52 aa).

It belongs to the small heat shock protein (HSP20) family. In terms of assembly, homodimer. Aggregates with homologous proteins, including alpha-A-crystallin and the small heat shock protein HSPB1, to form large heteromeric complexes.

May contribute to the transparency and refractive index of the lens. This Eudromia elegans (Elegant crested-tinamou) protein is Alpha-crystallin B chain (CRYAB).